A 190-amino-acid chain; its full sequence is Translation initiation factor IF-3 (190 aa).

Residues 159-190 are disordered; the sequence is QSEVQQKPKREGRNMIMFLSPRKSPLIKKDNE.

The protein belongs to the IF-3 family. In terms of assembly, monomer.

It is found in the cytoplasm. In terms of biological role, IF-3 binds to the 30S ribosomal subunit and shifts the equilibrium between 70S ribosomes and their 50S and 30S subunits in favor of the free subunits, thus enhancing the availability of 30S subunits on which protein synthesis initiation begins. In Prochlorococcus marinus (strain MIT 9215), this protein is Translation initiation factor IF-3.